Reading from the N-terminus, the 251-residue chain is 3-deoxy-manno-octulosonate cytidylyltransferase (251 aa).

Belongs to the KdsB family.

It localises to the cytoplasm. It carries out the reaction 3-deoxy-alpha-D-manno-oct-2-ulosonate + CTP = CMP-3-deoxy-beta-D-manno-octulosonate + diphosphate. It functions in the pathway nucleotide-sugar biosynthesis; CMP-3-deoxy-D-manno-octulosonate biosynthesis; CMP-3-deoxy-D-manno-octulosonate from 3-deoxy-D-manno-octulosonate and CTP: step 1/1. It participates in bacterial outer membrane biogenesis; lipopolysaccharide biosynthesis. Activates KDO (a required 8-carbon sugar) for incorporation into bacterial lipopolysaccharide in Gram-negative bacteria. In Brucella canis (strain ATCC 23365 / NCTC 10854 / RM-666), this protein is 3-deoxy-manno-octulosonate cytidylyltransferase.